The primary structure comprises 1135 residues: Putative beta-hexosaminidase (1135 aa).

Positions 1-23 (MKWVKSGVGILGILLTICHAVTS) are cleaved as a signal peptide. Disordered stretches follow at residues 970–1082 (AHPP…LPGQ) and 1107–1135 (QMRG…QQAG). The segment covering 986 to 1003 (NMPPPFPPRPPFGPPMLP) has biased composition (pro residues). 2 stretches are compositionally biased toward low complexity: residues 1004-1026 (PGQM…TALG) and 1043-1073 (TGQA…LPGQ).

The protein belongs to the glycosyl hydrolase 20 family. In terms of tissue distribution, prismatic layer of shell (at protein level). Expressed primarily in the mantle with highest level in the mantle edge and lower level in the mantle pallium.

The protein localises to the secreted. It catalyses the reaction Hydrolysis of terminal non-reducing N-acetyl-D-hexosamine residues in N-acetyl-beta-D-hexosaminides.. The protein operates within glycan degradation; chitin degradation. The chain is Putative beta-hexosaminidase from Margaritifera margaritifera (Freshwater pearl mussel).